We begin with the raw amino-acid sequence, 393 residues long: NAD(P)H-quinone oxidoreductase subunit H, chloroplastic (393 aa).

It belongs to the complex I 49 kDa subunit family. As to quaternary structure, NDH is composed of at least 16 different subunits, 5 of which are encoded in the nucleus.

It localises to the plastid. Its subcellular location is the chloroplast thylakoid membrane. It carries out the reaction a plastoquinone + NADH + (n+1) H(+)(in) = a plastoquinol + NAD(+) + n H(+)(out). The catalysed reaction is a plastoquinone + NADPH + (n+1) H(+)(in) = a plastoquinol + NADP(+) + n H(+)(out). In terms of biological role, NDH shuttles electrons from NAD(P)H:plastoquinone, via FMN and iron-sulfur (Fe-S) centers, to quinones in the photosynthetic chain and possibly in a chloroplast respiratory chain. The immediate electron acceptor for the enzyme in this species is believed to be plastoquinone. Couples the redox reaction to proton translocation, and thus conserves the redox energy in a proton gradient. This is NAD(P)H-quinone oxidoreductase subunit H, chloroplastic from Guizotia abyssinica (Niger).